The following is a 231-amino-acid chain: Ribonuclease 3 (231 aa).

The RNase III domain maps to 7–135; sequence IQAIESKLNF…ILGAVYLDGG (129 aa). Glutamate 48 lines the Mg(2+) pocket. Aspartate 52 is an active-site residue. Positions 121 and 124 each coordinate Mg(2+). The active site involves glutamate 124. One can recognise a DRBM domain in the interval 160-229; it reads NPKNRLQQFT…AKQALSTHDN (70 aa).

This sequence belongs to the ribonuclease III family. In terms of assembly, homodimer. Mg(2+) is required as a cofactor.

The protein resides in the cytoplasm. The catalysed reaction is Endonucleolytic cleavage to 5'-phosphomonoester.. Functionally, digests double-stranded RNA. Involved in the processing of primary rRNA transcript to yield the immediate precursors to the large and small rRNAs (23S and 16S). Processes some mRNAs, and tRNAs when they are encoded in the rRNA operon. Processes pre-crRNA and tracrRNA of type II CRISPR loci if present in the organism. The sequence is that of Ribonuclease 3 from Chlamydia trachomatis serovar L2 (strain ATCC VR-902B / DSM 19102 / 434/Bu).